The primary structure comprises 679 residues: Transmembrane protein 214-B (679 aa).

Positions 1–94 are disordered; it reads MASGAPDGKW…KKKPQSGDSV (94 aa). The span at 18–30 shows a compositional bias: basic and acidic residues; it reads KSGERREGERKAL. 3 N-linked (GlcNAc...) asparagine glycosylation sites follow: N70, N298, and N322. The next 2 membrane-spanning stretches (helical) occupy residues 468–488 and 606–626; these read GGFP…GSVL and LLLH…EAAV.

The protein belongs to the TMEM214 family. Constitutively interacts with CASP4; required for the localization of procaspase 4 to the ER.

The protein resides in the endoplasmic reticulum membrane. Functionally, critical mediator, in cooperation with CASP4, of endoplasmic reticulum-stress induced apoptosis. Required or the activation of CASP4 following endoplasmic reticulum stress. The sequence is that of Transmembrane protein 214-B (tmem214-b) from Xenopus laevis (African clawed frog).